The following is a 141-amino-acid chain: Hemoglobin subunit alpha-A (141 aa).

In terms of domain architecture, Globin spans 1-141 (VLSAADKTNV…VGAVLTAKYR (141 aa)). His-58 provides a ligand contact to O2. Residue His-87 coordinates heme b.

This sequence belongs to the globin family. As to quaternary structure, heterotetramer of two alpha chains and two beta chains. As to expression, red blood cells.

Its function is as follows. Involved in oxygen transport from the lung to the various peripheral tissues. This is Hemoglobin subunit alpha-A (HBAA) from Cygnus olor (Mute swan).